The following is a 780-amino-acid chain: Striatin (780 aa).

Residues 53 to 120 (LHFLQHEWAR…QERAKYHKLK (68 aa)) adopt a coiled-coil conformation. The segment at 55-63 (FLQHEWARF) is caveolin-binding. Residues 123–150 (TELNQGDMKPPSYDSDEGNETEVQPQQN) form a disordered region. Serine 137 is modified (phosphoserine). The interval 149–166 (QNSQLMWKQGRQLLRQYL) is calmodulin-binding. Threonine 225 bears the Phosphothreonine mark. A phosphoserine mark is found at serine 227, serine 229, serine 245, and serine 259. Disordered stretches follow at residues 289–312 (DFLVTSEEGDNESRSAGDGTDWEK), 334–353 (EQYKKERKGKKGVKRPNRSK), and 364–392 (VDELPSLQPSVGSPSRPSSSRLPEQELSR). The segment covering 299 to 312 (NESRSAGDGTDWEK) has biased composition (basic and acidic residues). A compositionally biased stretch (basic residues) spans 338–351 (KERKGKKGVKRPNR). 6 WD repeats span residues 461–500 (SHFDGIRALAFHPIEPVLITASEDHTLKMWNLQKTAPAKK), 514–553 (AHKGPVLCVVMSSNGEQCYSGGTDGRIQSWSTTNPNVDPY), 567–606 (GHTDAVWGLAYSAAHQRLLSCSADGTLRLWNTTEVAPALS), 662–701 (SSSCQINRVISHPTLPISITAHEDRHIKFYDNNTGKLIHS), 704–743 (AHLEAVTSLAVDPNGLYLMSGSHDCSIRLWNLESKTCIQE), and 750–780 (KFEESIHDVAFHPSKCYIASAGADALAKVFV).

It belongs to the WD repeat striatin family. In terms of assembly, part of the core of STRIPAK complexes composed of PP2A catalytic and scaffolding subunits, the striatins (PP2A regulatory subunits), the striatin-associated proteins MOB4, STRIP1 and STRIP2, PDCD10 and members of the STE20 kinases, such as STK24 and STK26. Interacts with CTTNBP2; this interaction may regulate dendritic spine distribution of STRN. Activation of glutamate receptors weakens the interaction with CTTNBP2. Mainly expressed in brain but is also expressed at low levels in various tissues such as kidney, spleen, skeletal muscle and lung.

Its subcellular location is the cytoplasm. The protein resides in the membrane. It localises to the cell projection. It is found in the dendritic spine. Its function is as follows. Calmodulin-binding scaffolding protein which is the center of the striatin-interacting phosphatase and kinase (STRIPAK) complexes. STRIPAK complexes have critical roles in protein (de)phosphorylation and are regulators of multiple signaling pathways including Hippo, MAPK, nuclear receptor and cytoskeleton remodeling. Different types of STRIPAK complexes are involved in a variety of biological processes such as cell growth, differentiation, apoptosis, metabolism and immune regulation. The protein is Striatin (Strn) of Mus musculus (Mouse).